Here is a 305-residue protein sequence, read N- to C-terminus: DNA-directed RNA polymerase 35 kDa subunit (305 aa).

This sequence belongs to the poxviridae DNA-directed RNA polymerase 35 kDa subunit family. In terms of assembly, the DNA-dependent RNA polymerase used for intermediate and late genes expression consists of eight subunits 147 kDa, 133 kDa, 35 kDa, 30 kDa, 22 kDa, 19 kDa, 18 kDa and 7 kDa totalling more than 500 kDa in mass. The same holoenzyme, with the addition of the transcription-specificity factor RAP94, is used for early gene expression.

Its subcellular location is the virion. The enzyme catalyses RNA(n) + a ribonucleoside 5'-triphosphate = RNA(n+1) + diphosphate. In terms of biological role, part of the DNA-dependent RNA polymerase which catalyzes the transcription of viral DNA into RNA using the four ribonucleoside triphosphates as substrates. Responsible for the transcription of early, intermediate and late genes. DNA-dependent RNA polymerase associates with the early transcription factor (ETF), itself composed of D6 and A7, thereby allowing the early genes transcription. Late transcription, and probably also intermediate transcription, require newly synthesized RNA polymerase. In Variola virus (isolate Human/India/Ind3/1967) (VARV), this protein is DNA-directed RNA polymerase 35 kDa subunit (OPG156).